A 461-amino-acid polypeptide reads, in one-letter code: V-type ATP synthase beta chain 1 (461 aa).

Belongs to the ATPase alpha/beta chains family.

Its function is as follows. Produces ATP from ADP in the presence of a proton gradient across the membrane. The V-type beta chain is a regulatory subunit. The protein is V-type ATP synthase beta chain 1 of Clostridium tetani (strain Massachusetts / E88).